Consider the following 156-residue polypeptide: Small ribosomal subunit protein uS7 (156 aa).

This sequence belongs to the universal ribosomal protein uS7 family. In terms of assembly, part of the 30S ribosomal subunit. Contacts proteins S9 and S11.

One of the primary rRNA binding proteins, it binds directly to 16S rRNA where it nucleates assembly of the head domain of the 30S subunit. Is located at the subunit interface close to the decoding center, probably blocks exit of the E-site tRNA. The chain is Small ribosomal subunit protein uS7 from Finegoldia magna (strain ATCC 29328 / DSM 20472 / WAL 2508) (Peptostreptococcus magnus).